The following is a 467-amino-acid chain: Peroxisome proliferator-activated receptor alpha (467 aa).

The segment at residues 99-173 (NIECRICGDK…VGMSHNAIRF (75 aa)) is a DNA-binding region (nuclear receptor). 2 consecutive NR C4-type zinc fingers follow at residues 102–122 (CRIC…CEGC) and 139–161 (CDRS…FHKC). Residues 239–466 (FVIHDMETLC…PLLQEIYRDM (228 aa)) form the NR LBD domain. The required for heterodimerization with RXRA stretch occupies residues 304–433 (DQVTLLKYGV…PKLLQKLADL (130 aa)).

This sequence belongs to the nuclear hormone receptor family. NR1 subfamily. As to quaternary structure, heterodimer; with RXRA. This heterodimerization is required for DNA binding and transactivation activity. Interacts with NCOA3 coactivator. Interacts with CITED2; the interaction stimulates its transcriptional activity. Also interacts with PPARBP in vitro. Interacts with AKAP13, LPIN1, PRDM16 and coactivator NCOA6. Interacts with ASXL1 and ASXL2. Interacts with PER2. Interacts with SIRT1; the interaction seems to be modulated by NAD(+) levels. Interacts with CRY1 and CRY2. In hepatocytes, interacts with PAQR3 and HUWE1; the interactions promote PPARA poylubiquitination and HUWE1-mediated degradation. Post-translationally, ubiquitinated by E3 ubiquitin-protein ligase HUWE1; leading to proteasomal degradation. Phosphorylated.

It localises to the nucleus. Its function is as follows. Ligand-activated transcription factor. Key regulator of lipid metabolism. Activated by the endogenous ligand 1-palmitoyl-2-oleoyl-sn-glycerol-3-phosphocholine (16:0/18:1-GPC). Activated by oleylethanolamide, a naturally occurring lipid that regulates satiety. Receptor for peroxisome proliferators such as hypolipidemic drugs and fatty acids. Regulates the peroxisomal beta-oxidation pathway of fatty acids. Functions as a transcription activator for the ACOX1 and P450 genes. Transactivation activity requires heterodimerization with RXRA and is antagonized by NR2C2. May be required for the propagation of clock information to metabolic pathways regulated by PER2. This is Peroxisome proliferator-activated receptor alpha (PPARA) from Cavia porcellus (Guinea pig).